A 487-amino-acid chain; its full sequence is Glutamyl-tRNA(Gln) amidotransferase subunit A (487 aa).

Residues Lys75 and Ser150 each act as charge relay system in the active site. Ser174 (acyl-ester intermediate) is an active-site residue.

The protein belongs to the amidase family. GatA subfamily. In terms of assembly, heterotrimer of A, B and C subunits.

It carries out the reaction L-glutamyl-tRNA(Gln) + L-glutamine + ATP + H2O = L-glutaminyl-tRNA(Gln) + L-glutamate + ADP + phosphate + H(+). Its function is as follows. Allows the formation of correctly charged Gln-tRNA(Gln) through the transamidation of misacylated Glu-tRNA(Gln) in organisms which lack glutaminyl-tRNA synthetase. The reaction takes place in the presence of glutamine and ATP through an activated gamma-phospho-Glu-tRNA(Gln). The polypeptide is Glutamyl-tRNA(Gln) amidotransferase subunit A (Deinococcus deserti (strain DSM 17065 / CIP 109153 / LMG 22923 / VCD115)).